Consider the following 141-residue polypeptide: Large ribosomal subunit protein uL16c (141 aa).

The segment covering 1-17 has biased composition (basic residues); the sequence is MLSPKRTKYRKPHRGNR. Positions 1–21 are disordered; sequence MLSPKRTKYRKPHRGNRKGQA.

This sequence belongs to the universal ribosomal protein uL16 family. Part of the 50S ribosomal subunit.

The protein resides in the plastid. It is found in the chloroplast. This Ostreococcus tauri protein is Large ribosomal subunit protein uL16c.